The primary structure comprises 211 residues: uncharacterized protein (211 aa).

Positions 1–43 are disordered; that stretch reads MRPEVGREPAALQPRQRPRSDHQLHRSPFTVPPRTPACRSPGP.

This is an uncharacterized protein from Homo sapiens (Human).